The chain runs to 441 residues: Protein eva-1 homolog C (441 aa).

The tract at residues 1–23 (MLLPGRARQPPTPQPVQHPGLRR) is disordered. The signal sequence occupies residues 1–48 (MLLPGRARQPPTPQPVQHPGLRRQVEPPGQLLRLFYCTVLVCSKEISA). Residues 49 to 322 (LTDFSGYLTK…AYIRAHPERA (274 aa)) are Extracellular-facing. N-linked (GlcNAc...) asparagine glycosylation occurs at Asn62. Residues 67–159 (ACDGDYLNLQ…KYLLVSFKCQ (93 aa)) enclose the SUEL-type lectin 1 domain. Asn165 carries an N-linked (GlcNAc...) asparagine glycan. The SUEL-type lectin 2 domain occupies 168–260 (VCEDQELKLH…KYLTVTYACV (93 aa)). The helical transmembrane segment at 323–343 (ALLFVSSVCIGLALTLCALVI) threads the bilayer. The Cytoplasmic segment spans residues 344–441 (RESCAKDFRD…SLPRNMGQFY (98 aa)). The segment at 362–390 (VPGSDKVEEDSEDEEEEEDPSESDFPGEL) is disordered. The segment covering 368–383 (VEEDSEDEEEEEDPSE) has biased composition (acidic residues).

Belongs to the EVA1 family. As to expression, ubiquitous.

It localises to the membrane. Functionally, binds heparin. The chain is Protein eva-1 homolog C (EVA1C) from Homo sapiens (Human).